We begin with the raw amino-acid sequence, 577 residues long: MNIQSILSNKIKQAMRQAGADEQCDALVKPSGKPQFGDYQANGIMATAKKLGLNPRDFAQKVLDLIDLKNIAEKMEIAGPGFINIFLDKNWLAENIQVTLQDKKLGVTVEEIQTIVVDYSSPNVAKEMHVGHLRSTIIGDAVVRTLEFLGHNVIRANHVGDWGTQFGMLIAYLEKMENEHASAMELADLEAFYRAAKEHYDNDETFAEKARNYVVKLQNGDAYCRTMWKKLVDITMQQNQRNYDRLNVTLTQNDVMGESLYNPMLPEIVADLKAQGLAVEDEGAQVVYLEEFKNKDGDPMGVIVQKKDGGFLYTTTDIAAAKYRYHTLKADRALVFSDTRQSQHMQQAWLITRKAGYVPDSFQLEHKNFGMMLGKDGKPFKTRSGGTVKLTDLLDEAIERADKLISEKSTALSSKEKAAVIEAVGIGSVKYADLSKNRTTDYVFDWDIMLSFEGNTAPYMQYAYTRIRSIFNKTDISEEQLHPAKIQLTDEKERLLAIKLLQFEETVQIVGKEGTPHILCAYLYELAGLFSSFYEHCPILNNDNENVKLSRLKLALLTEKTLKQGLDLLGIKTVEKM.

The 'HIGH' region motif lies at 122–132 (PNVAKEMHVGH).

The protein belongs to the class-I aminoacyl-tRNA synthetase family. As to quaternary structure, monomer.

It localises to the cytoplasm. The enzyme catalyses tRNA(Arg) + L-arginine + ATP = L-arginyl-tRNA(Arg) + AMP + diphosphate. The chain is Arginine--tRNA ligase from Histophilus somni (strain 129Pt) (Haemophilus somnus).